Here is a 715-residue protein sequence, read N- to C-terminus: 1,4-alpha-glucan branching enzyme GlgB (715 aa).

Asp-396 acts as the Nucleophile in catalysis. The Proton donor role is filled by Glu-449.

This sequence belongs to the glycosyl hydrolase 13 family. GlgB subfamily. In terms of assembly, monomer.

It carries out the reaction Transfers a segment of a (1-&gt;4)-alpha-D-glucan chain to a primary hydroxy group in a similar glucan chain.. It functions in the pathway glycan biosynthesis; glycogen biosynthesis. Its function is as follows. Catalyzes the formation of the alpha-1,6-glucosidic linkages in glycogen by scission of a 1,4-alpha-linked oligosaccharide from growing alpha-1,4-glucan chains and the subsequent attachment of the oligosaccharide to the alpha-1,6 position. This Aliivibrio fischeri (strain ATCC 700601 / ES114) (Vibrio fischeri) protein is 1,4-alpha-glucan branching enzyme GlgB.